A 485-amino-acid polypeptide reads, in one-letter code: Probable cobyric acid synthase (485 aa).

A GATase cobBQ-type domain is found at 250-435 (EVEIAVIRLP…LHGLFDNENI (186 aa)). Catalysis depends on cysteine 328, which acts as the Nucleophile. Histidine 427 is a catalytic residue.

It belongs to the CobB/CobQ family. CobQ subfamily.

It participates in cofactor biosynthesis; adenosylcobalamin biosynthesis. Its function is as follows. Catalyzes amidations at positions B, D, E, and G on adenosylcobyrinic A,C-diamide. NH(2) groups are provided by glutamine, and one molecule of ATP is hydrogenolyzed for each amidation. In Methanosarcina acetivorans (strain ATCC 35395 / DSM 2834 / JCM 12185 / C2A), this protein is Probable cobyric acid synthase.